The sequence spans 229 residues: Biosynthetic peptidoglycan transglycosylase (229 aa).

The helical transmembrane segment at Phe14–Leu34 threads the bilayer.

This sequence belongs to the glycosyltransferase 51 family.

It localises to the cell inner membrane. It carries out the reaction [GlcNAc-(1-&gt;4)-Mur2Ac(oyl-L-Ala-gamma-D-Glu-L-Lys-D-Ala-D-Ala)](n)-di-trans,octa-cis-undecaprenyl diphosphate + beta-D-GlcNAc-(1-&gt;4)-Mur2Ac(oyl-L-Ala-gamma-D-Glu-L-Lys-D-Ala-D-Ala)-di-trans,octa-cis-undecaprenyl diphosphate = [GlcNAc-(1-&gt;4)-Mur2Ac(oyl-L-Ala-gamma-D-Glu-L-Lys-D-Ala-D-Ala)](n+1)-di-trans,octa-cis-undecaprenyl diphosphate + di-trans,octa-cis-undecaprenyl diphosphate + H(+). It functions in the pathway cell wall biogenesis; peptidoglycan biosynthesis. Its function is as follows. Peptidoglycan polymerase that catalyzes glycan chain elongation from lipid-linked precursors. The chain is Biosynthetic peptidoglycan transglycosylase from Shewanella denitrificans (strain OS217 / ATCC BAA-1090 / DSM 15013).